A 1100-amino-acid chain; its full sequence is Beta-alanine-activating enzyme (1100 aa).

The interval 162–181 (HKVTDREDRVSAESRTPEKE) is disordered. ATP contacts are provided by residues 197-205 (TSGTTGTPK), Asp427, Arg441, and Lys526. The 81-residue stretch at 552 to 632 (EELWGKLQYL…DVYNHIVQAV (81 aa)) folds into the Carrier domain. O-(pantetheine 4'-phosphoryl)serine is present on Ser591. A disordered region spans residues 643–671 (SYTTKRKFSDADPEEASGKPARLESAWPS). Position 651 is a phosphoserine (Ser651).

Belongs to the ATP-dependent AMP-binding enzyme family.

Covalently binds beta-alanine in an ATP-dependent manner to form a thioester bond with its phosphopantetheine group and transfers it to an as yet unknown acceptor via an amide bond. May be required for a post-translational protein modification or for post-transcriptional modification of an RNA. The sequence is that of Beta-alanine-activating enzyme (Aasdh) from Mus musculus (Mouse).